Consider the following 407-residue polypeptide: Substance-P receptor (407 aa).

At 1–31 (MDNVLPVDSDLFPNISTNTSEPNQFVQPAWQ) the chain is on the extracellular side. Asparagine 14 and asparagine 18 each carry an N-linked (GlcNAc...) asparagine glycan. A helical membrane pass occupies residues 32 to 54 (IVLWAAAYTVIVVTSVVGNVVVM). Over 55–64 (WIILAHKRMR) the chain is Cytoplasmic. The helical transmembrane segment at 65-86 (TVTNYFLVNLAFAEASMAAFNT) threads the bilayer. Residues 87-106 (VVNFTYAVHNEWYYGLFYCK) are Extracellular-facing. An intrachain disulfide couples cysteine 105 to cysteine 180. The helical transmembrane segment at 107–128 (FHNFFPIAAVFASIYSMTAVAF) threads the bilayer. Topologically, residues 129–148 (DRYMAIIHPLQPRLSATATK) are cytoplasmic. Residues 149-169 (VVICVIWVLALLLAFPQGYYS) form a helical membrane-spanning segment. The Extracellular portion of the chain corresponds to 170-194 (TTETMPGRVVCMIEWPSHPDKIYEK). The chain crosses the membrane as a helical span at residues 195–219 (VYHICVTVLIYFLPLLVIGYAYTVV). Residues 220-248 (GITLWASEIPGDSSDRYHEQVSAKRKVVK) are Cytoplasmic-facing. Residues 249–270 (MMIVVVCTFAICWLPFHIFFLL) form a helical membrane-spanning segment. At 271 to 283 (PYINPDLYLKKFI) the chain is on the extracellular side. Residues 284–308 (QQVYLAIMWLAMSSTMYNPIIYCCL) traverse the membrane as a helical segment. The Cytoplasmic segment spans residues 309–407 (NDRFRLGFKH…SSSFYSNMLS (99 aa)). A lipid anchor (S-palmitoyl cysteine) is attached at cysteine 322. Residues 363 to 407 (GAHEEDPEEGPKATPSSLDLTSNGSSRSNSKTVTESSSFYSNMLS) form a disordered region. Residues 376–407 (TPSSLDLTSNGSSRSNSKTVTESSSFYSNMLS) are compositionally biased toward polar residues.

This sequence belongs to the G-protein coupled receptor 1 family. Interacts with ARRB1.

The protein resides in the cell membrane. Its function is as follows. This is a receptor for the tachykinin neuropeptide substance P. It is probably associated with G proteins that activate a phosphatidylinositol-calcium second messenger system. The rank order of affinity of this receptor to tachykinins is: substance P &gt; substance K &gt; neuromedin-K. The polypeptide is Substance-P receptor (TACR1) (Cavia porcellus (Guinea pig)).